We begin with the raw amino-acid sequence, 684 residues long: Threonine--tRNA ligase (684 aa).

One can recognise a TGS domain in the interval 1-66 (MSTAASPAPA…DADVEVVPVP (66 aa)). The catalytic stretch occupies residues 261-567 (DHRKLGVELD…LTEHYAGAFP (307 aa)). Residues cysteine 366, histidine 417, and histidine 544 each coordinate Zn(2+).

Belongs to the class-II aminoacyl-tRNA synthetase family. Homodimer. It depends on Zn(2+) as a cofactor.

Its subcellular location is the cytoplasm. It carries out the reaction tRNA(Thr) + L-threonine + ATP = L-threonyl-tRNA(Thr) + AMP + diphosphate + H(+). In terms of biological role, catalyzes the attachment of threonine to tRNA(Thr) in a two-step reaction: L-threonine is first activated by ATP to form Thr-AMP and then transferred to the acceptor end of tRNA(Thr). Also edits incorrectly charged L-seryl-tRNA(Thr). The sequence is that of Threonine--tRNA ligase from Mycobacterium sp. (strain KMS).